Consider the following 174-residue polypeptide: uncharacterized protein (174 aa).

This is an uncharacterized protein from Archaeoglobus fulgidus (strain ATCC 49558 / DSM 4304 / JCM 9628 / NBRC 100126 / VC-16).